The following is a 225-amino-acid chain: Small ribosomal subunit protein uS5 (225 aa).

One can recognise an S5 DRBM domain in the interval 57 to 120 (LEEQVLDVKL…AQAKLSLIKV (64 aa)).

The protein belongs to the universal ribosomal protein uS5 family. As to quaternary structure, part of the 30S ribosomal subunit. Contacts protein S4.

Functionally, with S4 and S12 plays an important role in translational accuracy. The sequence is that of Small ribosomal subunit protein uS5 from Methanococcus vannielii (strain ATCC 35089 / DSM 1224 / JCM 13029 / OCM 148 / SB).